A 619-amino-acid chain; its full sequence is Probable galacturonosyltransferase 7 (619 aa).

Topologically, residues 1-19 (MKGGGGGGGGGGGGKRRWK) are cytoplasmic. The chain crosses the membrane as a helical; Signal-anchor for type II membrane protein span at residues 20–40 (VLVIGVLVLVILSMLVPLAFL). The Lumenal segment spans residues 41-619 (LGLHNGFHSP…RFLSDCNVNP (579 aa)). Residues N68, N106, N132, N343, and N421 are each glycosylated (N-linked (GlcNAc...) asparagine). The disordered stretch occupies residues 95–139 (KSDINVGSRDVNATSGTDSKKRGLPVSPTVVANPSPANKTKSEAS). The segment covering 124–139 (VVANPSPANKTKSEAS) has biased composition (polar residues).

Belongs to the glycosyltransferase 8 family. As to expression, expressed in roots, inflorescences, flowers, siliques, leaves and stems.

It is found in the golgi apparatus membrane. The protein operates within glycan metabolism; pectin biosynthesis. In terms of biological role, may be involved in pectin biosynthesis. The polypeptide is Probable galacturonosyltransferase 7 (GAUT7) (Arabidopsis thaliana (Mouse-ear cress)).